Consider the following 274-residue polypeptide: Diaminopimelate epimerase (274 aa).

3 residues coordinate substrate: Asn-11, Gln-44, and Asn-64. The active-site Proton donor is the Cys-73. Substrate contacts are provided by residues 74–75 (GN), Asn-157, Asn-190, and 208–209 (ER). Cys-217 serves as the catalytic Proton acceptor. Substrate is bound at residue 218-219 (GS).

This sequence belongs to the diaminopimelate epimerase family. Homodimer.

Its subcellular location is the cytoplasm. It catalyses the reaction (2S,6S)-2,6-diaminopimelate = meso-2,6-diaminopimelate. It functions in the pathway amino-acid biosynthesis; L-lysine biosynthesis via DAP pathway; DL-2,6-diaminopimelate from LL-2,6-diaminopimelate: step 1/1. Its function is as follows. Catalyzes the stereoinversion of LL-2,6-diaminopimelate (L,L-DAP) to meso-diaminopimelate (meso-DAP), a precursor of L-lysine and an essential component of the bacterial peptidoglycan. The chain is Diaminopimelate epimerase from Shigella boydii serotype 18 (strain CDC 3083-94 / BS512).